The sequence spans 339 residues: Fructose-1,6-bisphosphatase class 1 (339 aa).

Mg(2+) contacts are provided by Glu-94, Asp-116, Leu-118, and Asp-119. Substrate-binding positions include Asp-119 to Ser-122, Asn-210, and Lys-276. Glu-282 is a binding site for Mg(2+).

It belongs to the FBPase class 1 family. Homotetramer. The cofactor is Mg(2+).

Its subcellular location is the cytoplasm. The catalysed reaction is beta-D-fructose 1,6-bisphosphate + H2O = beta-D-fructose 6-phosphate + phosphate. The protein operates within carbohydrate biosynthesis; gluconeogenesis. The sequence is that of Fructose-1,6-bisphosphatase class 1 from Burkholderia ambifaria (strain ATCC BAA-244 / DSM 16087 / CCUG 44356 / LMG 19182 / AMMD) (Burkholderia cepacia (strain AMMD)).